The chain runs to 123 residues: Potassium voltage-gated channel subfamily E member 2 (123 aa).

N6 and N29 each carry an N-linked (GlcNAc...) asparagine glycan. Residues 49-69 traverse the membrane as a helical segment; sequence VILYLMVMIGMFSFIVVAILV. Topologically, residues 70-123 are cytoplasmic; that stretch reads STVKSKRREHSQHPYHQYIVEDWQEKYKSQILHLEDSKATIHENMGATGFTVSP.

It belongs to the potassium channel KCNE family. As to quaternary structure, interacts with KCNB1. Associates with KCNH2/ERG1. May associate with KCNQ2 and KCNQ3. Associates with HCN1 and probably HCN2. Heteromultimer with KCNC2. Interacts with KCNC2. Interacts with KCNQ1. Forms a heterooligomer complex with KCNQ1 that targets to the membrane raft and leading to currents with an apparently instantaneous activation, a rapid deactivation process and a linear current-voltage relationship and decreases the amplitude of the outward current.

The protein resides in the cell membrane. Its subcellular location is the apical cell membrane. Ancillary protein that functions as a regulatory subunit of the voltage-gated potassium (Kv) channel complex composed of pore-forming and potassium-conducting alpha subunits and of regulatory beta subunits. KCNE2 beta subunit modulates the gating kinetics and enhances stability of the channel complex. Alters the gating of the delayed rectifier Kv channel containing KCNB1 alpha subunit. Associates with KCNH2/HERG alpha subunit Kv channel to form the rapidly activating component of the delayed rectifying potassium current (IKr) in heart. May associate with KCNQ2 and/or KCNQ3 alpha subunits to modulate the native M-type current. May associate with HCN1 and HCN2 channel subunits to increase potassium current. Forms a heterooligomer complex with KCNQ1/KVLQT1 alpha subunits which leads to currents with an apparently instantaneous activation, a rapid deactivation process and a linear current-voltage relationship and decreases the amplitude of the outward current. KCNQ1-KCNE2 channel associates with Na(+)-coupled myo-inositol symporter in the apical membrane of choroid plexus epithelium and regulates the myo-inositol gradient between blood and cerebrospinal fluid with an impact on neuron excitability. In Mus musculus (Mouse), this protein is Potassium voltage-gated channel subfamily E member 2.